A 451-amino-acid chain; its full sequence is COBRA-like protein 6 (451 aa).

The N-terminal stretch at 1 to 21 (MAVLGSLLLLILAATLSVAVA) is a signal peptide. N-linked (GlcNAc...) asparagine glycosylation is found at N30, N155, N163, N202, N227, N323, N338, and N357. N426 carries the GPI-anchor amidated asparagine lipid modification. Positions 427 to 451 (AAPPAAASLVGSAVAMAALVFFLMA) are cleaved as a propeptide — removed in mature form.

Belongs to the COBRA family.

Its subcellular location is the cell membrane. Its function is as follows. Involved in determining the orientation of cell expansion, probably by playing an important role in cellulose deposition. May act by recruiting cellulose synthesizing complexes to discrete positions on the cell surface. This Oryza sativa subsp. japonica (Rice) protein is COBRA-like protein 6 (BC1L7).